The following is a 117-amino-acid chain: Large ribosomal subunit protein bL19 (117 aa).

It belongs to the bacterial ribosomal protein bL19 family.

In terms of biological role, this protein is located at the 30S-50S ribosomal subunit interface and may play a role in the structure and function of the aminoacyl-tRNA binding site. The sequence is that of Large ribosomal subunit protein bL19 from Shewanella halifaxensis (strain HAW-EB4).